Reading from the N-terminus, the 349-residue chain is Selenide, water dikinase (349 aa).

Selenocysteine 19 is an active-site residue. A non-standard amino acid (selenocysteine) is located at residue selenocysteine 19. ATP contacts are provided by residues lysine 22 and 50-52 (LGD). A Mg(2+)-binding site is contributed by aspartate 53. Residues aspartate 69, aspartate 92, and 140–142 (GHT) each bind ATP. Residue aspartate 92 participates in Mg(2+) binding. Aspartate 246 contacts Mg(2+).

Belongs to the selenophosphate synthase 1 family. Class I subfamily. As to quaternary structure, homodimer. The cofactor is Mg(2+).

The catalysed reaction is hydrogenselenide + ATP + H2O = selenophosphate + AMP + phosphate + 2 H(+). Its function is as follows. Synthesizes selenophosphate from selenide and ATP. The protein is Selenide, water dikinase of Methanocaldococcus jannaschii (strain ATCC 43067 / DSM 2661 / JAL-1 / JCM 10045 / NBRC 100440) (Methanococcus jannaschii).